A 223-amino-acid polypeptide reads, in one-letter code: MFKMKYLIYQITNIINGKIYIGAHATLDENDGYMGSGVNIKKSIKKYGIHNFKKEILYSFSSSEEMYKMEALLVNEEFVMRTDTYNAAIGGRGNPVIVHLQDPSYRNMLSIRTKEGMTVEAKRKISKAKTGVKQSDETIAKRVKGRNEYYKTHVHPRKNKPISISHRKAISEKLGGIKKFIPICIKGVKFDNPDYAAEHFKVSPKTIRNWINADDMPDCYRIK.

Positions 4 to 87 (MKYLIYQITN…FVMRTDTYNA (84 aa)) constitute a GIY-YIG domain.

The protein to endonucleases of group I introns of fungi and phage. Mg(2+) is required as a cofactor.

Functionally, probably involved in the movement of the endonuclease-encoding DNA. The sequence is that of Putative endonuclease segD (segD) from Enterobacteria phage T4 (Bacteriophage T4).